We begin with the raw amino-acid sequence, 246 residues long: Small ribosomal subunit protein uS2 (246 aa).

The tract at residues 225 to 246 (SKSSASVPNKDEYVAAEDGAAE) is disordered.

This sequence belongs to the universal ribosomal protein uS2 family.

The sequence is that of Small ribosomal subunit protein uS2 from Cellvibrio japonicus (strain Ueda107) (Pseudomonas fluorescens subsp. cellulosa).